The following is a 44-amino-acid chain: Thymosin beta-4, Y-chromosomal (44 aa).

The tract at residues 1–44 (MSDKPGMAEIEKFDKSKLKKTETQEKNPLSSKETIEQERQAGES) is disordered. 2 stretches are compositionally biased toward basic and acidic residues: residues 9-25 (EIEK…ETQE) and 33-44 (ETIEQERQAGES).

Belongs to the thymosin beta family. As to expression, ubiquitous.

The protein resides in the cytoplasm. It is found in the cytoskeleton. In terms of biological role, plays an important role in the organization of the cytoskeleton. Binds to and sequesters actin monomers (G actin) and therefore inhibits actin polymerization. In Homo sapiens (Human), this protein is Thymosin beta-4, Y-chromosomal (TMSB4Y).